The following is an 876-amino-acid chain: Inter-alpha-trypsin inhibitor heavy chain H3 (876 aa).

A signal peptide spans 1-18 (MVALSHLGSALQLGSLWG). Residues 19 to 31 (FPRSPFRLLGKRS) constitute a propeptide that is removed on maturation. The region spanning 26–155 (LLGKRSLPEG…KVTFELTYEE (130 aa)) is the VIT domain. Asparagine 88 carries N-linked (GlcNAc...) asparagine glycosylation. The 184-residue stretch at 281–464 (NVAFVIDISG…LQLQGFYEEV (184 aa)) folds into the VWFA domain. Asparagine 577 carries an N-linked (GlcNAc...) asparagine glycan. An Aspartate 1-(chondroitin 4-sulfate)-ester modification is found at aspartate 637. Positions 638–876 (PHFIIQVPEK…HTDYIVPNLF (239 aa)) are excised as a propeptide.

Belongs to the ITIH family. As to quaternary structure, I-alpha-I plasma protease inhibitors are assembled from one or two heavy chains (HC) and one light chain, bikunin. Pre-alpha-inhibitor (P-alpha-I) is composed of ITIH3/HC3 and bikunin. In terms of processing, heavy chains are linked to bikunin via chondroitin 4-sulfate esterified to the alpha-carboxyl of the C-terminal aspartate after propeptide cleavage.

The protein localises to the secreted. Its function is as follows. May act as a carrier of hyaluronan in serum or as a binding protein between hyaluronan and other matrix protein, including those on cell surfaces in tissues to regulate the localization, synthesis and degradation of hyaluronan which are essential to cells undergoing biological processes. In Pongo abelii (Sumatran orangutan), this protein is Inter-alpha-trypsin inhibitor heavy chain H3 (ITIH3).